A 157-amino-acid chain; its full sequence is UPF0262 protein Rleg2_0240 (157 aa).

Belongs to the UPF0262 family.

This Rhizobium leguminosarum bv. trifolii (strain WSM2304) protein is UPF0262 protein Rleg2_0240.